We begin with the raw amino-acid sequence, 430 residues long: MKQALRVAFGFLILWASVLHAEVRIVIDSGVDSGRPIGVVPFQWAGPGAAPEDIGGIVAADLRNSGKFNPLDRARLPQQPGSAQEVQPSAWSALGIDAVVVGQVTPNPDGSYNVAYQLVDTGGAPGTVLAQNSYKVNKQWLRYAGHTASDEVFEKLTGIKGAFRTRIAYVVQTNGGQFPYELRVSDYDGYNQFVVHRSPHPLMSPAWSPDGSKLAYVTFESGRSALVIQTLANGAVRQVASFPRHNGAPAFSPDGSKLAFALSKTGSLNLYVMDLASGQIRQVTDGRSNNTEPTWFPDSQNLAFTSDLAGRPQVYKVNINGGAPQRITWEGSQNQDADVSSDGKFMVMVSSNGGQQHIAKQDLATGGVQVLSSTFLDETPSLAPNGTMVIYSSSQGMGSVLNLVSTDGRFKARLPATDGQVKFPAWSPYL.

An N-terminal signal peptide occupies residues 1 to 21 (MKQALRVAFGFLILWASVLHA).

Belongs to the TolB family. In terms of assembly, the Tol-Pal system is composed of five core proteins: the inner membrane proteins TolA, TolQ and TolR, the periplasmic protein TolB and the outer membrane protein Pal. They form a network linking the inner and outer membranes and the peptidoglycan layer.

Its subcellular location is the periplasm. Functionally, part of the Tol-Pal system, which plays a role in outer membrane invagination during cell division and is important for maintaining outer membrane integrity. TolB occupies a key intermediary position in the Tol-Pal system because it communicates directly with both membrane-embedded components, Pal in the outer membrane and TolA in the inner membrane. The sequence is that of Tol-Pal system protein TolB from Shigella boydii serotype 4 (strain Sb227).